An 894-amino-acid polypeptide reads, in one-letter code: Histone-lysine N-methyltransferase PRDM9 (894 aa).

Disordered stretches follow at residues 1–23 (MSPE…RKPM) and 143–174 (SGSE…LRKK). In terms of domain architecture, KRAB-related spans 23–86 (MVKDAFKDIS…RRQAIKLQVD (64 aa)). The span at 143 to 164 (SGSEQAQKPVSPSGEASTSGQH) shows a compositional bias: polar residues. The Zn(2+) site is built by C205, C208, C216, and H219. Positions 244-358 (PGLRIGPSGI…PGCELLVWYG (115 aa)) constitute an SET domain. Residues 256 to 258 (AGL), Y291, and 320 to 321 (NC) each bind S-adenosyl-L-methionine. 288–294 (NNGYSWL) is a substrate binding site. Residue Y357 coordinates substrate. Position 368 is an N6,N6,N6-trimethyllysine; alternate (K368). At K368 the chain carries N6-methyllysine; alternate. N6-methyllysine occurs at positions 372 and 374. The C2H2-type 1 zinc finger occupies 388-411 (HPCPSCCLAFSSQKFLSQHVERNH). Residues C390, C393, H406, and H411 each contribute to the Zn(2+) site. Residues 408 to 469 (ERNHSSQNFP…SKLLNKRTWQ (62 aa)) are disordered. A compositionally biased stretch (basic and acidic residues) spans 444–461 (PHSRNDKTKGQEIKERSK). A C2H2-type 2; degenerate zinc finger spans residues 524–546 (VKYGECGQGFSVKSDVITHQRTH). C2H2-type zinc fingers lie at residues 552 to 574 (YVCR…QRIH), 580 to 602 (YVCR…QRTH), 608 to 630 (YVCR…QRRH), 636 to 658 (YVCR…QRRH), 664 to 686 (YVCR…QRTH), 692 to 714 (YVCR…QRTH), 720 to 742 (YVCR…QRTH), 748 to 770 (YVCR…QRTH), 776 to 798 (YVCR…QRTH), 804 to 826 (YVCR…QRTH), 832 to 854 (YVCR…QRTH), and 860 to 882 (YVCR…QRTH). The Zn(2+) site is built by C722, C725, H738, H742, C750, C753, H766, H770, C778, C781, H794, H798, C806, C809, H822, and H826. Residues 730–820 (SNKSHLLRHQ…RGFSNKSHLL (91 aa)) form a DNA-binding region.

Belongs to the class V-like SAM-binding methyltransferase superfamily. As to quaternary structure, homodimer. Interacts with EHMT2 and CDYL; interaction only takes place when PRDM9 is bound to hotspot DNA. Interacts with CXXC1; this interaction does not link PRDM9-activated recombination hotspot sites with DSB machinery and is not required for the hotspot recognition pathway. Forms a complex with EWSR1, REC8, SYCP3 and SYCP1; complex formation is dependent of phosphorylated form of REC8 and requires PRDM9 bound to hotspot DNA; EWSR1 joins PRDM9 with the chromosomal axis through REC8. In terms of processing, mono-methylated; automethylated. Tri-methylated; automethylated. Mono-methylation is predominant; automethylation is lower and slower than H3 peptide methylation and is in a highest S-adenosyl-L-methionine concentration-dependent. There are two major sites for automethylation at Lys-368 and Lys-374. Lysines can be simultaneously methylated, such as Lys-368(me3)/Lys-372(me1), Lys-368(me1)/Lys-374(me1) and Lys-368(me1)/Lys-372(me1)/Lys-374(me1). Automethylation is an intramolecular (cis) process.

The protein resides in the nucleus. The protein localises to the chromosome. It catalyses the reaction L-lysyl-[protein] + S-adenosyl-L-methionine = N(6)-methyl-L-lysyl-[protein] + S-adenosyl-L-homocysteine + H(+). The catalysed reaction is N(6)-methyl-L-lysyl-[protein] + S-adenosyl-L-methionine = N(6),N(6)-dimethyl-L-lysyl-[protein] + S-adenosyl-L-homocysteine + H(+). The enzyme catalyses L-lysyl(4)-[histone H3] + 3 S-adenosyl-L-methionine = N(6),N(6),N(6)-trimethyl-L-lysyl(4)-[histone H3] + 3 S-adenosyl-L-homocysteine + 3 H(+). It carries out the reaction L-lysyl(36)-[histone H3] + 3 S-adenosyl-L-methionine = N(6),N(6),N(6)-trimethyl-L-lysyl(36)-[histone H3] + 3 S-adenosyl-L-homocysteine + 3 H(+). It catalyses the reaction L-lysyl(9)-[histone H3] + 3 S-adenosyl-L-methionine = N(6),N(6),N(6)-trimethyl-L-lysyl(9)-[histone H3] + 3 S-adenosyl-L-homocysteine + 3 H(+). The catalysed reaction is L-lysyl(20)-[histone H4] + S-adenosyl-L-methionine = N(6)-methyl-L-lysyl(20)-[histone H4] + S-adenosyl-L-homocysteine + H(+). The enzyme catalyses N(6)-methyl-L-lysyl(20)-[histone H4] + S-adenosyl-L-methionine = N(6),N(6)-dimethyl-L-lysyl(20)-[histone H4] + S-adenosyl-L-homocysteine + H(+). Inhibited by suramin with an IC(50) of 4.1 uM. Its function is as follows. Histone methyltransferase that sequentially mono-, di-, and tri-methylates both 'Lys-4' (H3K4) and 'Lys-36' (H3K36) of histone H3 to produce respectively trimethylated 'Lys-4' (H3K4me3) and trimethylated 'Lys-36' (H3K36me3) histone H3 and plays a key role in meiotic prophase by determining hotspot localization thereby promoting meiotic recombination. Can also methylate all four core histones with H3 being the best substrate and the most highly modified. Is also able, on one hand, to mono and di-methylate H4K20 and on other hand to trimethylate H3K9 with the di-methylated H3K9 as the best substrate. During meiotic prophase, binds specific DNA sequences through its zinc finger domains thereby determining hotspot localization where it promotes local H3K4me3 and H3K36me3 enrichment on the same nucleosomes through its histone methyltransferase activity. Thereby promotes double-stranded breaks (DSB) formation, at this subset of PRDM9-binding sites, that initiates meiotic recombination for the proper meiotic progression. During meiotic progression hotspot-bound PRDM9 interacts with several complexes; in early leptonema binds CDYL and EHMT2 followed by EWSR1 and CXXC1 by the end of leptonema. EWSR1 joins PRDM9 with the chromosomal axis through REC8. In this way, controls the DSB repair pathway, pairing of homologous chromosomes and sex body formation. Moreover plays a central role in the transcriptional activation of genes during early meiotic prophase thanks to H3K4me3 and H3K36me3 enrichment that represents a specific tag for epigenetic transcriptional activation. In addition performs automethylation. Acetylation and phosphorylation of histone H3 attenuate or prevent histone H3 methylation. This is Histone-lysine N-methyltransferase PRDM9 from Homo sapiens (Human).